Reading from the N-terminus, the 157-residue chain is MAQQADQQTVTDSTPELPTTIKELADLLDIPLVDCLVPCNFCGKFLDFLEVCDFDKKQLTLIWKGHFVTACCRSCCAATAIYEFNEFYQQTVLGRDIELATGKSIFDLKIRCQTCLSFLDTIEKLDSCGRGLPFHKVRDRWKGICRQCKHLYLNNDR.

2 zinc fingers span residues cysteine 39–cysteine 75 and cysteine 112–cysteine 148.

Belongs to the papillomaviridae E6 protein family. Forms homodimers. Interacts with ubiquitin-protein ligase UBE3A/E6-AP; this interaction stimulates UBE3A ubiquitin activity. Interacts with host BAK1.

The protein resides in the host cytoplasm. Its subcellular location is the host nucleus. Its function is as follows. Plays a major role in the induction and maintenance of cellular transformation. E6 associates with host UBE3A/E6-AP ubiquitin-protein ligase and modulates its activity. Protects host keratinocytes from apoptosis by mediating the degradation of host BAK1. May also inhibit host immune response. The protein is Protein E6 of Homo sapiens (Human).